Consider the following 242-residue polypeptide: Uridylate kinase (242 aa).

13–16 contributes to the ATP binding site; it reads KLSG. Gly-55 lines the UMP pocket. Residues Gly-56 and Arg-60 each coordinate ATP. UMP contacts are provided by residues Asp-75 and 136–143; that span reads TGNPFFTT. Residues Thr-163, Tyr-169, and Asp-172 each coordinate ATP.

The protein belongs to the UMP kinase family. Homohexamer.

It is found in the cytoplasm. The enzyme catalyses UMP + ATP = UDP + ADP. Its pathway is pyrimidine metabolism; CTP biosynthesis via de novo pathway; UDP from UMP (UMPK route): step 1/1. Inhibited by UTP. Functionally, catalyzes the reversible phosphorylation of UMP to UDP. The sequence is that of Uridylate kinase from Zymomonas mobilis subsp. mobilis (strain ATCC 31821 / ZM4 / CP4).